The primary structure comprises 487 residues: L-tartrate/succinate antiporter (487 aa).

14 helical membrane passes run Y10–E30, T33–P53, G54–F74, W93–G113, T137–S157, I189–L209, F236–V256, L292–V312, G313–S333, V340–I360, S370–L390, F393–L413, I418–T438, and I465–V485.

This sequence belongs to the SLC13A/DASS transporter (TC 2.A.47) family. DIT1 subfamily.

Its subcellular location is the cell inner membrane. The catalysed reaction is (2R,3R)-tartrate(out) + succinate(in) = (2R,3R)-tartrate(in) + succinate(out). Catalyzes the uptake of tartrate in exchange for intracellular succinate. Essential for anaerobic L-tartrate fermentation. The chain is L-tartrate/succinate antiporter (ttdT) from Escherichia coli O157:H7.